We begin with the raw amino-acid sequence, 778 residues long: Actin-binding LIM protein 1 (778 aa).

4 consecutive LIM zinc-binding domains span residues 97–156 (IHCH…MYGT), 156–216 (TRCH…MSSS), 224–283 (SNCA…LFGV), and 283–343 (VKCE…TKTE). Ser216 is subject to Phosphoserine. A disordered region spans residues 339-370 (STKTEEKLRPTRTSSESIYSRPGSSIPGSPGH). Low complexity predominate over residues 360–369 (PGSSIPGSPG). Ser367 is subject to Phosphoserine. A phosphotyrosine mark is found at Tyr373 and Tyr396. Disordered stretches follow at residues 414–510 (YDDK…QAPK) and 552–597 (AAQA…EELL). Ser422, Ser426, and Ser431 each carry phosphoserine. Polar residues predominate over residues 423–434 (LGESPRTLSPTP). Residue Thr433 is modified to Phosphothreonine. Ser435 carries the post-translational modification Phosphoserine. Residue Tyr439 is modified to Phosphotyrosine. The span at 449–474 (RSTSQGSINSPVYSRHSYTPTTSRSP) shows a compositional bias: polar residues. A phosphoserine mark is found at Ser452, Ser455, Ser458, Ser498, and Ser587. The stretch at 590 to 614 (EEDDEELLRRRQLQEEQLMKLNSGL) forms a coiled coil. Lys620 participates in a covalent cross-link: Glycyl lysine isopeptide (Lys-Gly) (interchain with G-Cter in SUMO2). Phosphoserine is present on residues Ser640, Ser655, Ser677, and Ser706. One can recognise an HP domain in the interval 710 to 778 (MLEPKIFPYE…NDMKKKAKLF (69 aa)).

Binds F-actin. Interacts with ABRA. In terms of tissue distribution, detected in liver, heart, skeletal muscle, brain and retina, where it is concentrated in the inner segment and in the outer plexiform layers.

It is found in the cytoplasm. Its subcellular location is the cytoskeleton. Its function is as follows. May act as scaffold protein. May play a role in the development of the retina. Has been suggested to play a role in axon guidance. This chain is Actin-binding LIM protein 1 (ABLIM1), found in Homo sapiens (Human).